The primary structure comprises 722 residues: Polyribonucleotide nucleotidyltransferase (722 aa).

Residues Asp495 and Asp501 each contribute to the Mg(2+) site. The region spanning 562 to 621 (PRLLSFRIDPELIGTVIGPGGRTIKGITERTNTKIDIEDGGIVTIASHDGAAAEEAQRII) is the KH domain. One can recognise an S1 motif domain in the interval 631–699 (GEIFPGSITR…NRGRINLTLR (69 aa)). The tract at residues 700-722 (GVSQNGGMSNYPEPTPTPVAPLT) is disordered. Residues 712–722 (EPTPTPVAPLT) show a composition bias toward pro residues.

It belongs to the polyribonucleotide nucleotidyltransferase family. Requires Mg(2+) as cofactor.

It localises to the cytoplasm. The catalysed reaction is RNA(n+1) + phosphate = RNA(n) + a ribonucleoside 5'-diphosphate. Involved in mRNA degradation. Catalyzes the phosphorolysis of single-stranded polyribonucleotides processively in the 3'- to 5'-direction. This Prochlorococcus marinus (strain NATL2A) protein is Polyribonucleotide nucleotidyltransferase.